The chain runs to 928 residues: Heme/hemopexin-binding protein (928 aa).

An N-terminal signal peptide occupies residues Met1 to Ala21. Repeat copies occupy residues Asn101 to Leu106, Lys149 to Leu154, Lys155 to Leu160, Lys161 to Val166, Lys167 to Ile172, Asn205 to Leu210, Asn279 to Leu284, Asn410 to Leu415, Asn635 to Leu640, and Asn674 to Met679. Residues Asn101 to Met679 form a 6 X 6 AA approximate repeats region. The tract at residues Lys149–Ile172 is 4 X 6 AA approximate tandem repeats.

It localises to the secreted. In terms of biological role, binds heme/hemopexin complexes. This chain is Heme/hemopexin-binding protein (hxuA), found in Haemophilus influenzae.